A 166-amino-acid chain; its full sequence is V-type proton ATPase subunit c4 (166 aa).

Topologically, residues 1–13 (MASSGFSGDETAP) are lumenal. Residues 14 to 34 (FFGFLGAAAALVFSCMGAAYG) traverse the membrane as a helical segment. The Cytoplasmic portion of the chain corresponds to 35 to 56 (TAKSGVGVASMGVMRPELVMKS). A helical membrane pass occupies residues 57 to 77 (IVPVVMAGVLGIYGLIIAVII). At 78–96 (STGINPKAKSYYLFDGYAH) the chain is on the lumenal side. The chain crosses the membrane as a helical span at residues 97 to 118 (LSSGLACGLAGLSAGMAIGIVG). Topologically, residues 119-130 (DAGVRANAQQPK) are cytoplasmic. A helical membrane pass occupies residues 131-156 (LFVGMILILIFAEALALYGLIVGIIL). Over 157–166 (SSRAGQSRAE) the chain is Lumenal.

Belongs to the V-ATPase proteolipid subunit family. In terms of assembly, V-ATPase is a heteromultimeric enzyme composed of a peripheral catalytic V1 complex (components A to H) attached to an integral membrane V0 proton pore complex (components: a, c, c'', d and e). The proteolipid components c and c'' are present as a hexameric ring that forms the proton-conducting pore. Interacts with APD2.

Its subcellular location is the vacuole membrane. Its function is as follows. Proton-conducting pore forming subunit of the membrane integral V0 complex of vacuolar ATPase. V-ATPase is responsible for acidifying a variety of intracellular compartments in eukaryotic cells. The chain is V-type proton ATPase subunit c4 (VHA-c4) from Arabidopsis thaliana (Mouse-ear cress).